The following is a 348-amino-acid chain: uncharacterized protein (348 aa).

Positions 1–11 are enriched in pro residues; sequence MTNPQGPPNDP. The interval 1 to 83 is disordered; it reads MTNPQGPPND…RSGRQAAHQA (83 aa). Helical transmembrane passes span 111 to 131 and 235 to 255; these read LTVF…LIGG and IPIL…DGTV.

It is found in the cell membrane. This is an uncharacterized protein from Mycobacterium tuberculosis (strain CDC 1551 / Oshkosh).